Here is a 398-residue protein sequence, read N- to C-terminus: Acetate kinase (398 aa).

Asparagine 7 is a binding site for Mg(2+). Lysine 14 contacts ATP. Residue arginine 85 participates in substrate binding. Catalysis depends on aspartate 142, which acts as the Proton donor/acceptor. ATP-binding positions include 202 to 206 (HLGNG), 277 to 279 (DMR), and 325 to 329 (GIGEN). Glutamate 379 contacts Mg(2+).

Belongs to the acetokinase family. In terms of assembly, homodimer. Requires Mg(2+) as cofactor. Mn(2+) is required as a cofactor.

Its subcellular location is the cytoplasm. It carries out the reaction acetate + ATP = acetyl phosphate + ADP. Its pathway is metabolic intermediate biosynthesis; acetyl-CoA biosynthesis; acetyl-CoA from acetate: step 1/2. Catalyzes the formation of acetyl phosphate from acetate and ATP. Can also catalyze the reverse reaction. The polypeptide is Acetate kinase (Deinococcus radiodurans (strain ATCC 13939 / DSM 20539 / JCM 16871 / CCUG 27074 / LMG 4051 / NBRC 15346 / NCIMB 9279 / VKM B-1422 / R1)).